A 391-amino-acid chain; its full sequence is NADH-quinone oxidoreductase subunit D (391 aa).

It belongs to the complex I 49 kDa subunit family. NDH-1 is composed of 14 different subunits. Subunits NuoB, C, D, E, F, and G constitute the peripheral sector of the complex.

It localises to the cell inner membrane. The enzyme catalyses a quinone + NADH + 5 H(+)(in) = a quinol + NAD(+) + 4 H(+)(out). NDH-1 shuttles electrons from NADH, via FMN and iron-sulfur (Fe-S) centers, to quinones in the respiratory chain. The immediate electron acceptor for the enzyme in this species is believed to be ubiquinone. Couples the redox reaction to proton translocation (for every two electrons transferred, four hydrogen ions are translocated across the cytoplasmic membrane), and thus conserves the redox energy in a proton gradient. This is NADH-quinone oxidoreductase subunit D from Rickettsia rickettsii (strain Sheila Smith).